The primary structure comprises 155 residues: Microsomal glutathione S-transferase 1 (155 aa).

Residues 3 to 9 (DLRQLMD) are Lumenal-facing. A helical transmembrane segment spans residues 10-33 (NEVLMAFTSYATIILTKMMFMSSA). Over 34 to 62 (TAFQRITNKVFANPEDCAGFGKGENAKKF) the chain is Cytoplasmic. Glutathione is bound at residue Arg-38. Lys-42, Lys-55, and Lys-60 each carry N6-acetyllysine. Residues 63–96 (VRTDEKVERVRRAHLNDLENIVPFLGIGLLYSLS) form a helical membrane-spanning segment. Glutathione-binding residues include Arg-73, Arg-74, His-76, and Glu-81. Topologically, residues 97–99 (GPD) are lumenal. A helical transmembrane segment spans residues 100-123 (LSTALMHFRIFVGARIYHTIAYLT). Residue Tyr-121 participates in glutathione binding. Residues 124–128 (PLPQP) are Cytoplasmic-facing. The helical transmembrane segment at 129–148 (NRGLAFFVGYGVTLSMAYRL) threads the bilayer. Residues 149 to 155 (LRSRLYL) lie on the Lumenal side of the membrane.

It belongs to the MAPEG family. In terms of assembly, homotrimer; The trimer binds only one molecule of glutathione. In terms of processing, acetylation of Lys-42 and Lys-55 is observed in liver mitochondria from fasted mice but not from fed mice. In terms of tissue distribution, expressed in the testes (at protein level).

Its subcellular location is the endoplasmic reticulum membrane. The protein localises to the mitochondrion outer membrane. It carries out the reaction RX + glutathione = an S-substituted glutathione + a halide anion + H(+). Its function is as follows. Conjugation of reduced glutathione to a wide number of exogenous and endogenous hydrophobic electrophiles. This is Microsomal glutathione S-transferase 1 (Mgst1) from Mus musculus (Mouse).